The sequence spans 84 residues: MAKSNKRRPAPEKPVKTRKCVFCSKKGQDIDYKDTALLRTYISERGKIRARRVTGNCVQHQRDIAVAVKNAREVALLPFGSSTR.

Belongs to the bacterial ribosomal protein bS18 family. Part of the 30S ribosomal subunit. Forms a tight heterodimer with protein bS6.

Functionally, binds as a heterodimer with protein bS6 to the central domain of the 16S rRNA, where it helps stabilize the platform of the 30S subunit. In Mycobacterium sp. (strain JLS), this protein is Small ribosomal subunit protein bS18.